A 426-amino-acid chain; its full sequence is RuvB-like protein 1 (426 aa).

62–69 contributes to the ATP binding site; it reads GPVGSGKT.

It belongs to the RuvB family. In terms of assembly, component of the SWR1 chromatin remodeling complex, the INO80 chromatin remodeling complex, and of the R2TP complex.

It is found in the nucleus. It carries out the reaction ATP + H2O = ADP + phosphate + H(+). In terms of biological role, DNA helicase which participates in several chromatin remodeling complexes, including the SWR1 and the INO80 complexes. The SWR1 complex mediates the ATP-dependent exchange of histone H2A for the H2A variant HZT1 leading to transcriptional regulation of selected genes by chromatin remodeling. The INO80 complex remodels chromatin by shifting nucleosomes and is involved in DNA repair. Also involved in pre-rRNA processing. This is RuvB-like protein 1 (RVB1) from Encephalitozoon cuniculi (strain GB-M1) (Microsporidian parasite).